Consider the following 23-residue polypeptide: GLLQTIKEKLKELATGLVIGVQS.

Belongs to the frog skin active peptide (FSAP) family. Aurein subfamily. In terms of tissue distribution, expressed by the skin dorsal glands.

The protein resides in the secreted. Has no antimicrobial or anticancer activity. The protein is Aurein-4.4 of Ranoidea aurea (Green and golden bell frog).